A 384-amino-acid polypeptide reads, in one-letter code: Gastrin-releasing peptide receptor (384 aa).

Residues 1-39 lie on the Extracellular side of the membrane; the sequence is MDPNNCSHLNLEVDPFLSCNNTFNQTLNPPKMDNWFHPG. Residues N5, N20, and N24 are each glycosylated (N-linked (GlcNAc...) asparagine). Residues 40-63 form a helical membrane-spanning segment; sequence IIYVIPAVYGLIIVIGLIGNITLI. Topologically, residues 64–77 are cytoplasmic; the sequence is KIFCTVKSMRNVPN. The chain crosses the membrane as a helical span at residues 78-97; it reads LFISSLALGDLLLLVTCAPV. Topologically, residues 98 to 115 are extracellular; it reads DASKYLADRWLFGRIGCK. C114 and C197 are disulfide-bonded. The chain crosses the membrane as a helical span at residues 116–137; sequence LIPFIQLTSVGVSVFTLTALSA. Residues 138–153 lie on the Cytoplasmic side of the membrane; it reads DRYKAIVRPMDIQASH. A helical transmembrane segment spans residues 154–175; that stretch reads ALMKICLKAALIWIVSMLLAIP. Topologically, residues 176–209 are extracellular; sequence EAVFSDLHPFHVKDTNQTFISCAPYPHSNELHPK. Residues 210-235 traverse the membrane as a helical segment; that stretch reads IHSMASFLVFYIIPLSIISVYYYFIA. Topologically, residues 236-265 are cytoplasmic; that stretch reads RNLIQSAYNLPVEGNIHVKKQIESRKRLAK. The chain crosses the membrane as a helical span at residues 266 to 286; the sequence is TVLVFVGLFAFCWLPNHVIYL. Residues 287–299 are Extracellular-facing; it reads YRSYHYSEVDTSM. Residues 300–326 traverse the membrane as a helical segment; sequence LHFITSICARLLAFTNSCVNPFALYLL. Topologically, residues 327–384 are cytoplasmic; sequence SKSFRKQFNTQLLCCQPSLLNRSHSTGRSTTCMTSFKSTNPSATFSLINGNICHEGYV. The S-palmitoyl cysteine moiety is linked to residue C340. At S351 the chain carries Phosphoserine.

The protein belongs to the G-protein coupled receptor 1 family. In terms of tissue distribution, expressed in the hippocampal CA1 region (at protein level).

It is found in the cell membrane. Its function is as follows. Receptor for gastrin-releasing peptide (GRP). Signals via association with G proteins that activate a phosphatidylinositol-calcium second messenger system, resulting in Akt phosphorylation. Contributes to the regulation of food intake. Contributes to the perception of prurient stimuli and transmission of itch signals in the spinal cord that promote scratching behavior, but does not play a role in the perception of pain. Contributes primarily to nonhistaminergic itch sensation. In one study, shown to act in the amygdala as part of an inhibitory network which inhibits memory specifically related to learned fear. In another study, shown to contribute to disinhibition of glutamatergic cells in the auditory cortex via signaling on vasoactive intestinal peptide-expressing cells which leads to enhanced auditory fear memories. Contributes to the induction of sighing through signaling in the pre-Botzinger complex, a cluster of several thousand neurons in the ventrolateral medulla responsible for inspiration during respiratory activity. The polypeptide is Gastrin-releasing peptide receptor (Grpr) (Rattus norvegicus (Rat)).